The chain runs to 130 residues: Glycine cleavage system H protein (130 aa).

One can recognise a Lipoyl-binding domain in the interval 24–106 (TVTIGITDHA…YDEGWFFKVK (83 aa)). An N6-lipoyllysine modification is found at Lys-65.

It belongs to the GcvH family. In terms of assembly, the glycine cleavage system is composed of four proteins: P, T, L and H. The cofactor is (R)-lipoate.

Functionally, the glycine cleavage system catalyzes the degradation of glycine. The H protein shuttles the methylamine group of glycine from the P protein to the T protein. The sequence is that of Glycine cleavage system H protein from Teredinibacter turnerae (strain ATCC 39867 / T7901).